The sequence spans 349 residues: UDP-3-O-acylglucosamine N-acyltransferase (349 aa).

His243 serves as the catalytic Proton acceptor.

The protein belongs to the transferase hexapeptide repeat family. LpxD subfamily. Homotrimer.

The catalysed reaction is a UDP-3-O-[(3R)-3-hydroxyacyl]-alpha-D-glucosamine + a (3R)-hydroxyacyl-[ACP] = a UDP-2-N,3-O-bis[(3R)-3-hydroxyacyl]-alpha-D-glucosamine + holo-[ACP] + H(+). Its pathway is bacterial outer membrane biogenesis; LPS lipid A biosynthesis. In terms of biological role, catalyzes the N-acylation of UDP-3-O-acylglucosamine using 3-hydroxyacyl-ACP as the acyl donor. Is involved in the biosynthesis of lipid A, a phosphorylated glycolipid that anchors the lipopolysaccharide to the outer membrane of the cell. This chain is UDP-3-O-acylglucosamine N-acyltransferase, found in Myxococcus xanthus (strain DK1622).